The following is a 210-amino-acid chain: Cdc42 effector protein 2 (210 aa).

S2 is subject to N-acetylserine. The CRIB domain maps to 30 to 44 (ISPPLGDFRHTIHIG). Phosphoserine occurs at positions 31, 101, and 141. The segment at 122–171 (PTAQAPPKPPRLHLETPQPSPQEGGSVDIWRIPETGSPNSGLTPESGAEE) is disordered.

It belongs to the BORG/CEP family. In terms of assembly, interacts with RHOQ and CDC42 in a GTP-dependent manner, and with SEPT7. Highly expressed in the heart. Weakly expressed in the pancreas and liver.

Its subcellular location is the endomembrane system. The protein localises to the cytoplasm. It is found in the cytoskeleton. Probably involved in the organization of the actin cytoskeleton. May act downstream of CDC42 to induce actin filament assembly leading to cell shape changes. Induces pseudopodia formation in fibroblasts in a CDC42-dependent manner. This is Cdc42 effector protein 2 (CDC42EP2) from Homo sapiens (Human).